The following is a 156-amino-acid chain: Probable cyclic pyranopterin monophosphate synthase (156 aa).

Residues Met73–His75 and Met109–Glu110 contribute to the substrate site. Asp124 is an active-site residue.

Belongs to the MoaC family. Homohexamer; trimer of dimers.

It catalyses the reaction (8S)-3',8-cyclo-7,8-dihydroguanosine 5'-triphosphate = cyclic pyranopterin phosphate + diphosphate. It functions in the pathway cofactor biosynthesis; molybdopterin biosynthesis. Functionally, catalyzes the conversion of (8S)-3',8-cyclo-7,8-dihydroguanosine 5'-triphosphate to cyclic pyranopterin monophosphate (cPMP). This chain is Probable cyclic pyranopterin monophosphate synthase, found in Archaeoglobus fulgidus (strain ATCC 49558 / DSM 4304 / JCM 9628 / NBRC 100126 / VC-16).